A 175-amino-acid chain; its full sequence is ATP synthase subunit d, mitochondrial (175 aa).

Ser-2 is subject to N-acetylserine.

F-type ATP synthases have 2 components, the catalytic core F(1) and the membrane-embedded component F(0), linked together by a central stalk and a peripheral stalk. The central stalk, also called rotor shaft, is often seen as part of F(1). The peripheral stalk is seen as part of F(0). F(0) contains the membrane channel next to the rotor. F-type ATP synthases form dimers but each monomer functions independently in ATP generation. The dimer consists of 18 different polypeptides: ATP1 (subunit alpha, part of F(1), 3 molecules per monomer), ATP2 (subunit beta, part of F(1), 3 molecules per monomer), ATP3 (subunit gamma, part of the central stalk), ATP4 (subunit b, part of the peripheral stalk), ATP5/OSCP (subunit 5/OSCP, part of the peripheral stalk), ATP6 (subunit a, part of the peripheral stalk), ATP7 (subunit d, part of the peripheral stalk), ATP8 (subunit 8, part of the peripheral stalk), OLI1 (subunit c, part of the rotor, 10 molecules per monomer), ATP14 (subunit h, part of the peripheral stalk), ATP15 (subunit epsilon, part of the central stalk), ATP16 (subunit delta, part of the central stalk), ATP17 (subunit f, part of the peripheral stalk), ATP18 (subunit i/j, part of the peripheral stalk). Dimer-specific subunits are ATP19 (subunit k, at interface between monomers), ATP20 (subunit g, at interface between monomers), TIM11 (subunit e, at interface between monomers). Also contains subunit L.

It localises to the mitochondrion inner membrane. Mitochondrial membrane ATP synthase (F(1)F(0) ATP synthase or Complex V) produces ATP from ADP in the presence of a proton gradient across the membrane which is generated by electron transport complexes of the respiratory chain. F-type ATP synthases consist of two structural domains, F(1) - containing the extramembraneous catalytic core, and F(0) - containing the membrane proton channel, linked together by a central stalk and a peripheral stalk. During catalysis, ATP synthesis in the catalytic domain of F(1) is coupled via a rotary mechanism of the central stalk subunits to proton translocation. Part of the complex F(0) domain and the peripheral stalk, which acts as a stator to hold the catalytic alpha/ATP1(3)beta/ATP2(3) subcomplex and subunit a/ATP6 static relative to the rotary elements. The polypeptide is ATP synthase subunit d, mitochondrial (Pichia angusta (Yeast)).